Reading from the N-terminus, the 341-residue chain is Heat-inducible transcription repressor HrcA (341 aa).

The protein belongs to the HrcA family.

In terms of biological role, negative regulator of class I heat shock genes (grpE-dnaK-dnaJ and groELS operons). Prevents heat-shock induction of these operons. The polypeptide is Heat-inducible transcription repressor HrcA (Corynebacterium glutamicum (strain ATCC 13032 / DSM 20300 / JCM 1318 / BCRC 11384 / CCUG 27702 / LMG 3730 / NBRC 12168 / NCIMB 10025 / NRRL B-2784 / 534)).